The chain runs to 911 residues: Probable dipeptidyl-aminopeptidase B (911 aa).

The disordered stretch occupies residues Met-1–Thr-39. Residues Met-1–Thr-97 lie on the Cytoplasmic side of the membrane. Positions Ser-25–Thr-39 are enriched in low complexity. Residues Leu-98 to Met-118 traverse the membrane as a helical; Signal-anchor for type II membrane protein segment. Residues Asn-119 to Arg-911 lie on the Vacuolar side of the membrane. N-linked (GlcNAc...) asparagine glycans are attached at residues Asn-268 and Asn-564. Ser-755 functions as the Charge relay system in the catalytic mechanism. A glycan (N-linked (GlcNAc...) asparagine) is linked at Asn-809. Active-site charge relay system residues include Asp-832 and His-865.

Belongs to the peptidase S9B family.

The protein localises to the vacuole membrane. The enzyme catalyses Release of an N-terminal dipeptide, Xaa-Yaa-|-Zaa-, from a polypeptide, preferentially when Yaa is Pro, provided Zaa is neither Pro nor hydroxyproline.. In terms of biological role, type IV dipeptidyl-peptidase which removes N-terminal dipeptides sequentially from polypeptides having unsubstituted N-termini provided that the penultimate residue is proline. The protein is Probable dipeptidyl-aminopeptidase B (DAPB) of Phaeosphaeria nodorum (strain SN15 / ATCC MYA-4574 / FGSC 10173) (Glume blotch fungus).